Consider the following 702-residue polypeptide: Methionine--tRNA ligase (702 aa).

The 'HIGH' region signature appears at 14–24; the sequence is PYANGPVHLGH. Residues C146, C149, C159, and C162 each coordinate Zn(2+). Residues 344–348 carry the 'KMSKS' region motif; sequence KFSKS. K347 provides a ligand contact to ATP. The region spanning 601 to 702 is the tRNA-binding domain; that stretch reads DFLKVDLRVA…GDEINGQQIQ (102 aa).

This sequence belongs to the class-I aminoacyl-tRNA synthetase family. MetG type 1 subfamily. As to quaternary structure, homodimer. Zn(2+) serves as cofactor.

The protein localises to the cytoplasm. The enzyme catalyses tRNA(Met) + L-methionine + ATP = L-methionyl-tRNA(Met) + AMP + diphosphate. In terms of biological role, is required not only for elongation of protein synthesis but also for the initiation of all mRNA translation through initiator tRNA(fMet) aminoacylation. The sequence is that of Methionine--tRNA ligase from Chlorobium limicola (strain DSM 245 / NBRC 103803 / 6330).